A 249-amino-acid polypeptide reads, in one-letter code: tRNA (guanine-N(1)-)-methyltransferase (249 aa).

Residues Gly-117 and 137 to 142 (LGDFVL) contribute to the S-adenosyl-L-methionine site.

It belongs to the RNA methyltransferase TrmD family. As to quaternary structure, homodimer.

It localises to the cytoplasm. It carries out the reaction guanosine(37) in tRNA + S-adenosyl-L-methionine = N(1)-methylguanosine(37) in tRNA + S-adenosyl-L-homocysteine + H(+). Functionally, specifically methylates guanosine-37 in various tRNAs. This chain is tRNA (guanine-N(1)-)-methyltransferase, found in Janthinobacterium sp. (strain Marseille) (Minibacterium massiliensis).